The sequence spans 295 residues: Proline iminopeptidase (295 aa).

The region spanning 35 to 279 (TLHGGPGMSH…ACSHLTMWED (245 aa)) is the AB hydrolase-1 domain. Serine 107 functions as the Nucleophile in the catalytic mechanism. Aspartate 246 is an active-site residue. Histidine 273 serves as the catalytic Proton donor.

It belongs to the peptidase S33 family. Part of the tricorn proteolytic complex.

It carries out the reaction Release of N-terminal proline from a peptide.. Functionally, cleaves H-Pro-AMC as well as a wide spectrum of amino acid substrates and several peptide substrates without a proline at the N-terminus. In conjunction with the three factors F1, F2 and F3, Tricorn degrades oligopeptides in a sequential manner, yielding free amino acids. The polypeptide is Proline iminopeptidase (pip) (Thermoplasma volcanium (strain ATCC 51530 / DSM 4299 / JCM 9571 / NBRC 15438 / GSS1)).